The primary structure comprises 135 residues: MAAAHLLRASRVWARWHPRALPVLRRPGGFSIREYAKKPVGKGGKGGVAAEALKDPEVCTDPTQLTTHAMGVNIYKEGQDVALKADSEYPTWLFQVNLGPPKKLEELEPESREYWRLLRKQNIWRHNRLSKNKKL.

The N-terminal 14 residues, 1–14, are a transit peptide targeting the mitochondrion; that stretch reads MAAAHLLRASRVWA.

Belongs to the mitochondrion-specific ribosomal protein mL54 family. As to quaternary structure, component of the mitochondrial ribosome large subunit (39S) which comprises a 16S rRNA and about 50 distinct proteins.

The protein localises to the mitochondrion. In Mus musculus (Mouse), this protein is Large ribosomal subunit protein mL54 (Mrpl54).